The sequence spans 687 residues: Adhesion G-protein coupled receptor G1 (687 aa).

Residues 1 to 25 (MTAQSLLQTTLFLLSLLFLVQGAHG) form the signal peptide. A heparin-binding site is contributed by 26-33 (RGHREDFR). Over 26-402 (RGHREDFRFC…VEVDAVHKHY (377 aa)) the chain is Extracellular. 2 disulfide bridges follow: cysteine 35–cysteine 91 and cysteine 121–cysteine 177. Residues asparagine 39, asparagine 148, and asparagine 171 are each glycosylated (N-linked (GlcNAc...) asparagine). 190–200 (LKHPQKASRRP) contributes to the heparin binding site. Residues 224–395 (DTVSFEEDRI…AVLMVSSVEV (172 aa)) form the GAIN-B domain. N-linked (GlcNAc...) asparagine glycans are attached at residues asparagine 234, asparagine 303, asparagine 324, and asparagine 341. Disulfide bonds link cysteine 346-cysteine 377 and cysteine 366-cysteine 379. The segment at 346 to 395 (CVFWVEDPTLSSPGHWSSAGCETVRRETQTSCFCNHLTYFAVLMVSSVEV) is GPS. A stachel region spans residues 384–397 (YFAVLMVSSVEVDA). A helical transmembrane segment spans residues 403–423 (LSLLSYVGCVVSALACIVTIA). Residues 424–442 (AYLCSRRKPRDYTIKVHMN) are Cytoplasmic-facing. A helical transmembrane segment spans residues 443-463 (LLLAVFLLDTSFLLSEPVALT). The Extracellular portion of the chain corresponds to 464–470 (GSEAGCR). A helical membrane pass occupies residues 471 to 491 (ASAIFLHFSLLACLSWMGLEG). At 492–512 (YNLYRLVVEVFGTYVPGYLLK) the chain is on the cytoplasmic side. Residues 513-533 (LSAMGWGFPIFLVTLVALVDV) traverse the membrane as a helical segment. Over 534 to 570 (DNYGPIILAVHRTPEGVIYPSMCWIRDSLVSYITNLG) the chain is Extracellular. The chain crosses the membrane as a helical span at residues 571–591 (LFSLVFLFNMAMLATMVVQIL). Residues 592-603 (RLRPHTQKWSHV) lie on the Cytoplasmic side of the membrane. The helical transmembrane segment at 604–624 (LTLLGLSLVLGLPWALIFFSF) threads the bilayer. The Extracellular portion of the chain corresponds to 625 to 630 (ASGTFQ). A helical membrane pass occupies residues 631–651 (LVVLYLFSIITSFQGFLIFIW). The Cytoplasmic segment spans residues 652–687 (YWSMRLQARGGPSPLKSNSDSARLPISSGSTSSSRI). Residues 664 to 687 (SPLKSNSDSARLPISSGSTSSSRI) are disordered. Residues 678–687 (SSGSTSSSRI) show a composition bias toward low complexity.

This sequence belongs to the G-protein coupled receptor 2 family. LN-TM7 subfamily. In terms of assembly, heterodimer of 2 chains generated by proteolytic processing; the large extracellular N-terminal fragment (ADGRG1 NT) and the membrane-bound C-terminal fragment (ADGRG1-CT) predominantly remain associated and non-covalently linked. ADGRG1 NT self-associates in a trans-trans manner; the homophilic interaction enhances receptor signaling. Interacts with TGM2. Interacts with heparin; leading to the reduction of ADGRG1 shedding. Interacts with COL3A1. Part of a GPCR-tetraspanin complex at least consisting of ADGRG1, CD81, eventually CD9, and GNA11 in which CD81 is enhancing the association of ADGRG1 with GNA11. Post-translationally, autoproteolytically cleaved into 2 fragments; the large extracellular N-terminal fragment (ADGRG1 NT) and the membrane-bound C-terminal fragment (ADGRG1 CT) predominantly remain associated and non-covalently linked. Shedding to yield the secreted ADGRG1 N-terminal fragment seems to involve metalloprotease(s). In terms of processing, ubiquitinated. Undergoes polyubiquitination upon activation.

The protein localises to the cell membrane. The protein resides in the secreted. It is found in the membrane raft. Forms a heterodimer of 2 chains generated by proteolytic processing that remain associated through non-covalent interactions mediated by the GAIN-B domain. In the inactivated receptor, the Stachel sequence (also named stalk) is embedded in the GAIN-B domain, where it adopts a beta-strand conformation. On activation, the Stachel moves into the 7 transmembrane region and adopts a twisted hook-shaped configuration that forms contacts within the receptor, leading to coupling of a G-alpha protein, which activates signaling. The cleaved GAIN-B and N-terminal domains can then dissociate from the rest of the receptor. In terms of biological role, adhesion G-protein coupled receptor (aGPCR) for steroid hormone 17alpha-hydroxypregnenolone (17-OH), which is involved in cell adhesion and cell-cell interactions. Ligand binding causes a conformation change that triggers signaling via guanine nucleotide-binding proteins (G proteins) and modulates the activity of downstream effectors, such as RhoA pathway. ADGRG1 is coupled to G(12) and/or G(13) G proteins (GNA12 and GNA13, respectively) and mediates the activation Rho small GTPases. Acts as a potent suppressor of ferroptosis: binding to 17-OH-binding initiates signaling that down-regulates CD36 and alleviates ferroptosis-induced liver injury. Ligand-binding also induces cell adhesion activity via association with proteins such as collagen III/COL3A1 and TGM2. Mediates cell matrix adhesion in developing neurons and hematopoietic stem cells. Involved in cortical development, specifically in maintenance of the pial basement membrane integrity and in cortical lamination: association with COL3A1 in the developing brain inhibits neuronal migration via activation of the RhoA pathway. Together with TGM2, acts as a regulator of myelination and myelin repair in oligodendrocyte precursor cells. Acts as a hemostatic sensor of shear force: G protein-coupled receptor signaling is activated in response to shear force in platelets, promoting G(13) G protein signaling, and platelet shape change and aggregation in a COL3A1-dependent manner. Acts as an inhibitor of VEGFA production thereby inhibiting angiogenesis through a signaling pathway mediated by PRKCA. Plays a role in the maintenance of hematopoietic stem cells in bone marrow niche. Plays an essential role in testis development. This Gorilla gorilla gorilla (Western lowland gorilla) protein is Adhesion G-protein coupled receptor G1 (ADGRG1).